The following is a 151-amino-acid chain: D-aminoacyl-tRNA deacylase (151 aa).

Residues 136–137 (GP) carry the Gly-cisPro motif, important for rejection of L-amino acids motif.

It belongs to the DTD family. In terms of assembly, homodimer.

The protein localises to the cytoplasm. It catalyses the reaction glycyl-tRNA(Ala) + H2O = tRNA(Ala) + glycine + H(+). It carries out the reaction a D-aminoacyl-tRNA + H2O = a tRNA + a D-alpha-amino acid + H(+). Functionally, an aminoacyl-tRNA editing enzyme that deacylates mischarged D-aminoacyl-tRNAs. Also deacylates mischarged glycyl-tRNA(Ala), protecting cells against glycine mischarging by AlaRS. Acts via tRNA-based rather than protein-based catalysis; rejects L-amino acids rather than detecting D-amino acids in the active site. By recycling D-aminoacyl-tRNA to D-amino acids and free tRNA molecules, this enzyme counteracts the toxicity associated with the formation of D-aminoacyl-tRNA entities in vivo and helps enforce protein L-homochirality. The chain is D-aminoacyl-tRNA deacylase from Streptococcus gordonii (strain Challis / ATCC 35105 / BCRC 15272 / CH1 / DL1 / V288).